A 349-amino-acid chain; its full sequence is KH domain-containing, RNA-binding, signal transduction-associated protein 2 (349 aa).

The KH domain maps to leucine 65 to isoleucine 135. Disordered regions lie at residues serine 181–alanine 263 and glutamate 321–tyrosine 349. The span at arginine 218–glycine 231 shows a compositional bias: low complexity. 2 positions are modified to omega-N-methylarginine: arginine 230 and arginine 240. The segment covering glycine 340 to tyrosine 349 has biased composition (basic and acidic residues).

Belongs to the KHDRBS family. As to quaternary structure, self-associates to form homooligomers. Interacts with KHDRBS1/SAM68; heterooligomer formation of KHDRBS family proteins may modulate RNA substrate specificity. Interacts with RBMX, SAFB, SFRS9 and YTHDC1. Interacts with FYN and PLCG1 (via SH3 domain). Interacts (phosphorylated) with FYN, GRB2, PLCG1 and RASA1 (via SH2 domain). Post-translationally, methylated. Tyrosine phosphorylated by FYN, PTK6 and SRC. Tyrosine phosphorylated by SRC during mitosis. In terms of tissue distribution, expressed in heart, skin, brain, colon, spleen, kidney, cervix and testis. In adult cerebellum expressed predominantly in Purkinje cells and in the hippocampus is abundantly expressed in glutamatergic dentate granule cells and in specific inhibitory Schaffer collateral-associated and path-associated interneurons; expression is restricted to neuronal subpopulations largely non-overlapping with expression of KHDRBS3/SLM-2 (at protein level).

Its subcellular location is the nucleus. In terms of biological role, RNA-binding protein that plays a role in the regulation of alternative splicing and influences mRNA splice site selection and exon inclusion. Binds both poly(A) and poly(U) homopolymers. Phosphorylation by PTK6 inhibits its RNA-binding ability. Induces an increased concentration-dependent incorporation of exon in CD44 pre-mRNA by direct binding to purine-rich exonic enhancer. Can regulate alternative splicing of neurexins NRXN1-3 in the laminin G-like domain 6 containing the evolutionary conserved neurexin alternative spliced segment 4 (AS4) involved in neurexin selective targeting to postsynaptic partners. Regulates cell-type specific alternative splicing of NRXN1 at AS4 and acts synergystically with SAM68 in exon skipping. In contrast acts antagonistically with SAM68 in NRXN3 exon skipping at AS4. Its phosphorylation by FYN inhibits its ability to regulate splice site selection. May function as an adapter protein for Src kinases during mitosis. This chain is KH domain-containing, RNA-binding, signal transduction-associated protein 2 (Khdrbs2), found in Mus musculus (Mouse).